Consider the following 528-residue polypeptide: UDP-glucuronosyltransferase 1A9 (528 aa).

Positions 1 to 23 are cleaved as a signal peptide; it reads MAPVAFPTSFFLCLLLASGLAQA. Asn-69 carries an N-linked (GlcNAc...) asparagine glycan. Residue Lys-97 is modified to N6-succinyllysine. Residues Asn-290 and Asn-428 are each glycosylated (N-linked (GlcNAc...) asparagine). Residues 486–506 form a helical membrane-spanning segment; that stretch reads VIGFLLAIVLTVVFIVFKCCA.

It belongs to the UDP-glycosyltransferase family. In terms of assembly, homodimer. Homooligomer. Interacts with UGT1A1, UGT1A3, UGT1A4, UGT1A6, UGT1A7, UGT1A8 and UGT1A10 to form heterodimers. As to expression, highly expressed in liver and at lower levels in stomach and kidney.

The protein resides in the endoplasmic reticulum membrane. The catalysed reaction is glucuronate acceptor + UDP-alpha-D-glucuronate = acceptor beta-D-glucuronoside + UDP + H(+). The enzyme catalyses 2-hydroxy-17beta-estradiol + UDP-alpha-D-glucuronate = 2-hydroxy-17beta-estradiol 3-O-(beta-D-glucuronate) + UDP + H(+). It catalyses the reaction 4-hydroxy-17beta-estradiol + UDP-alpha-D-glucuronate = 17beta-estradiol 4-O-(beta-D-glucuronate) + UDP + H(+). It carries out the reaction 2-hydroxyestrone + UDP-alpha-D-glucuronate = 2-hydroxyestrone 3-O-(beta-D-glucuronate) + UDP + H(+). The catalysed reaction is 4-hydroxyestrone + UDP-alpha-D-glucuronate = estrone 4-O-(beta-D-glucuronate) + UDP + H(+). The enzyme catalyses prunetin + UDP-alpha-D-glucuronate = prunetin-5-O-beta-D-glucuronide + UDP. It catalyses the reaction 8-iso-prostaglandin F2alpha + UDP-alpha-D-glucuronate = 8-iso-prostaglandin F2alpha-glucuronide + UDP + H(+). It carries out the reaction 5-epi-5-F2t-IsoP + UDP-alpha-D-glucuronate = 5-epi-5-F2t-IsoP-glucuronide + UDP + H(+). The catalysed reaction is (5Z,8Z,11Z,14Z)-eicosatetraenoate + UDP-alpha-D-glucuronate = O-[(5Z),(8Z),(11Z),(14Z)-eicosatetraenoyl]-beta-D-glucuronate + UDP. The enzyme catalyses 15-hydroxy-(5Z,8Z,11Z,13E)-eicosatetraenoate + UDP-alpha-D-glucuronate = 15-O-(beta-D-glucuronosyl)-(5Z,8Z,11Z,14Z)-eicosatetraenoate + UDP + H(+). It catalyses the reaction prostaglandin B1 + UDP-alpha-D-glucuronate = 15-O-(beta-D-glucuronosyl)-prostaglandin B1 + UDP + H(+). It carries out the reaction (E)-ferulate + UDP-alpha-D-glucuronate = (E)-4-O-(beta-D-glucuronosyl)-ferulate + UDP + H(+). The catalysed reaction is (E)-ferulate + UDP-alpha-D-glucuronate = (E)-ferulic acid beta-D-glucuronate ester + UDP. The enzyme catalyses candesartan + UDP-alpha-D-glucuronate = candesartan O-beta-D-glucuronoside + UDP. It catalyses the reaction SN-38 + UDP-alpha-D-glucuronate = SN-38 O-beta-D-glucuronide + UDP + H(+). It carries out the reaction mycophenolate + UDP-alpha-D-glucuronate = mycophenolate 7-O-beta-D-glucuronide + UDP + H(+). UDP-glucuronosyltransferase (UGT) that catalyzes phase II biotransformation reactions in which lipophilic substrates are conjugated with glucuronic acid to increase the metabolite's water solubility, thereby facilitating excretion into either the urine or bile. Essential for the elimination and detoxification of drugs, xenobiotics and endogenous compounds. Catalyzes the glucuronidation of endogenous estrogen hormones such as estradiol and estrone. Involved in the glucuronidation of arachidonic acid (AA) and AA-derived eicosanoids including 15-HETE, PGB1 and F2-isoprostanes (8-iso-PGF2alpha and 5-epi-5-F2t-IsoP). Glucuronates the phytochemical ferulic acid efficently at both the phenolic or the carboxylic acid group. Also catalyzes the glucuronidation of the isoflavones genistein, daidzein, glycitein, formononetin, biochanin A and prunetin, which are phytoestrogens with anticancer and cardiovascular properties. Involved in the glucuronidation of the AGTR1 angiotensin receptor antagonist caderastan, a drug which can inhibit the effect of angiotensin II. Involved in the biotransformation of 7-ethyl-10-hydroxycamptothecin (SN-38), the pharmacologically active metabolite of the anticancer drug irinotecan. Also metabolizes mycophenolate, an immunosuppressive agent. The chain is UDP-glucuronosyltransferase 1A9 from Mus musculus (Mouse).